A 121-amino-acid polypeptide reads, in one-letter code: Fluoride-specific ion channel FluC 3 (121 aa).

The next 4 membrane-spanning stretches (helical) occupy residues 3–23 (VFLP…RYLL), 40–60 (FTIN…ALGG), 69–89 (VLAT…NEMV), and 101–121 (AAYL…GFLV). Na(+) contacts are provided by G76 and S79.

The protein belongs to the fluoride channel Fluc/FEX (TC 1.A.43) family.

Its subcellular location is the cell membrane. It catalyses the reaction fluoride(in) = fluoride(out). With respect to regulation, na(+) is not transported, but it plays an essential structural role and its presence is essential for fluoride channel function. Its function is as follows. Fluoride-specific ion channel. Important for reducing fluoride concentration in the cell, thus reducing its toxicity. This Bifidobacterium longum (strain NCC 2705) protein is Fluoride-specific ion channel FluC 3.